The sequence spans 109 residues: Resistin (109 aa).

The first 18 residues, Met1–Gly18, serve as a signal peptide directing secretion. Cystine bridges form between Cys51-Cys104, Cys63-Cys103, Cys72-Cys89, Cys74-Cys91, and Cys78-Cys93.

This sequence belongs to the resistin/FIZZ family. Homodimer; disulfide-linked.

It is found in the secreted. Its function is as follows. Hormone that seems to suppress insulin ability to stimulate glucose uptake into adipose cells. Potentially links obesity to diabetes. The sequence is that of Resistin (RETN) from Bos taurus (Bovine).